A 581-amino-acid chain; its full sequence is Estrogen receptor (581 aa).

Residues 1 to 144 (MYPEDSRGSG…GFEIAKEMRF (144 aa)) form a modulating region. Disordered regions lie at residues 45–66 (APLDAHGPPSDGSLQSLGSGPN) and 96–122 (PVYRSSVPSSQQSVSREDQCGTSDDSY). Residues 56–66 (GSLQSLGSGPN) are compositionally biased toward polar residues. Residues 100–109 (SSVPSSQQSV) are compositionally biased toward low complexity. NR C4-type zinc fingers lie at residues 145 to 165 (CAVCSDYASGYHYGVWSCEGC) and 181 to 205 (CPATNQCTIDRNRRKSCQACRLRKC). The segment at residues 145-210 (CAVCSDYASG…RLRKCYEVGM (66 aa)) is a DNA-binding region (nuclear receptor). The hinge stretch occupies residues 211–272 (MKGGMRKDRG…GGGKSSMISM (62 aa)). Basic and acidic residues predominate over residues 216 to 246 (RKDRGRVLRRDKQRTGTSDRDKASKGLEHRT). Residues 216-268 (RKDRGRVLRRDKQRTGTSDRDKASKGLEHRTAPPQDRRKHISSSAGGGGGKSS) form a disordered region. The 237-residue stretch at 273–509 (PPDQVLLLLQ…DLLLEMLDAH (237 aa)) folds into the NR LBD domain. Positions 516 to 528 (RPAETWSQADREP) are enriched in basic and acidic residues. Residues 516-581 (RPAETWSQAD…GSRSECTHIL (66 aa)) are disordered. The segment covering 536-547 (SGGGGGGGGGSS) has biased composition (gly residues).

This sequence belongs to the nuclear hormone receptor family. NR3 subfamily. Binds DNA as a homodimer. Can form a heterodimer with ER-beta.

It localises to the nucleus. The steroid hormones and their receptors are involved in the regulation of eukaryotic gene expression and affect cellular proliferation and differentiation in target tissues. This is Estrogen receptor (esr1) from Pagrus major (Red sea bream).